Reading from the N-terminus, the 541-residue chain is Light-independent protochlorophyllide reductase subunit B (541 aa).

Asp36 provides a ligand contact to [4Fe-4S] cluster. Residue Asp290 is the Proton donor of the active site. 425-426 (GL) serves as a coordination point for substrate.

The protein belongs to the ChlB/BchB/BchZ family. As to quaternary structure, protochlorophyllide reductase is composed of three subunits; ChlL, ChlN and ChlB. Forms a heterotetramer of two ChlB and two ChlN subunits. The cofactor is [4Fe-4S] cluster.

The catalysed reaction is chlorophyllide a + oxidized 2[4Fe-4S]-[ferredoxin] + 2 ADP + 2 phosphate = protochlorophyllide a + reduced 2[4Fe-4S]-[ferredoxin] + 2 ATP + 2 H2O. The protein operates within porphyrin-containing compound metabolism; chlorophyll biosynthesis (light-independent). Functionally, component of the dark-operative protochlorophyllide reductase (DPOR) that uses Mg-ATP and reduced ferredoxin to reduce ring D of protochlorophyllide (Pchlide) to form chlorophyllide a (Chlide). This reaction is light-independent. The NB-protein (ChlN-ChlB) is the catalytic component of the complex. This chain is Light-independent protochlorophyllide reductase subunit B, found in Synechococcus sp. (strain CC9902).